Reading from the N-terminus, the 212-residue chain is Stromal cell-derived factor 2-like protein (212 aa).

The first 19 residues, 1–19 (MKSLFLILILCITIPLIFA), serve as a signal peptide directing secretion. Residue Asn-20 is glycosylated (N-linked (GlcNAc...) asparagine). MIR domains are found at residues 29–86 (ITKV…IKGP), 94–149 (GTVV…VETE), and 151–206 (GKEW…TEEG).

Its subcellular location is the secreted. In Dictyostelium discoideum (Social amoeba), this protein is Stromal cell-derived factor 2-like protein.